A 366-amino-acid chain; its full sequence is Putative agmatine deiminase (366 aa).

C357 serves as the catalytic Amidino-cysteine intermediate.

The protein belongs to the agmatine deiminase family.

The catalysed reaction is agmatine + H2O = N-carbamoylputrescine + NH4(+). This is Putative agmatine deiminase from Lactococcus lactis subsp. lactis (strain IL1403) (Streptococcus lactis).